Here is a 213-residue protein sequence, read N- to C-terminus: MNWLEERMPGIGRIAKDIAEHPVPSHTLNIFYCLGGLTLLCFIIQCLTGVFLAFYYKPTPEAAFASVQMITNEVRFGSVIRSMHHWSCQLMILLVFLHMLRVYYTGAFKKPRELNWVAGCFLLVLSLGLAFTGYLLPYEQLSYWASVIGAETANTLPVIGPTLKIMMQGGIKVTAEMLSRFYVLHVMILPAITIGFLVAHFIMIRVQGISDPM.

Residues 30-50 (IFYCLGGLTLLCFIIQCLTGV) form a helical membrane-spanning segment. C33 serves as a coordination point for heme c. Residues H84 and H98 each coordinate heme b. A run of 3 helical transmembrane segments spans residues 88–108 (CQLM…TGAF), 114–134 (LNWV…FTGY), and 184–204 (LHVM…FIMI). Heme b contacts are provided by H185 and H200.

Belongs to the cytochrome b family. PetB subfamily. The subunits of the cytochrome bc complex are a Rieske Fe-S protein (PetC), cytochrome b6 (PetB), subunit IV (PetD), and a diheme cytochrome c (PetX). Heme b is required as a cofactor. Requires heme c as cofactor.

The protein localises to the cell membrane. Functionally, component of the cytochrome bc complex which donates electrons to the photosynthetic reaction center. The sequence is that of Cytochrome b6 from Heliobacterium modesticaldum (strain ATCC 51547 / Ice1).